We begin with the raw amino-acid sequence, 444 residues long: MTKKHYICSNCGNISPKWSGQCFDCGVWGSIVEEIISTNQVIVKVGSKQDFDKLSGHVTEQLRIPTPIGEFNRVLGGGLVLGSAILIGGDPGIGKSTLLLQLAASNFASKMNCLYITGEESLDQIKLRAIRLNLTNYNTDILAATNLENIIASIEANKNNIDLIVIDSIQTITTKELSSPPGTVSQIRTCANELVNYAKQNNIIILLSCHVTKDGQLAGPKILEHLVDTVLYFEGDHNNHFRILRSYKNRFGGVGEIGVFEMSGSGLIEVTNPSELFLMQREQNVIGTSIFAGIEGSRPLLMEVQALMVPSNMVTPRRSAVGWDANRLSMILAVLSSRIGLNLANYEVYLSIAGGLKIADPASDLAVTASLISAATGNPVPEHSVFFGEISLSGEIRKTAKAETRIKEAVKLGFNKIICSKFENLTYDFISSVSHLKDLKEIIK.

The C4-type zinc-finger motif lies at 8–25; the sequence is CSNCGNISPKWSGQCFDC. Position 89 to 96 (89 to 96) interacts with ATP; that stretch reads GDPGIGKS. The RadA KNRFG motif motif lies at 248-252; that stretch reads KNRFG. A lon-protease-like region spans residues 347–444; that stretch reads EVYLSIAGGL…HLKDLKEIIK (98 aa).

This sequence belongs to the RecA family. RadA subfamily.

Functionally, DNA-dependent ATPase involved in processing of recombination intermediates, plays a role in repairing DNA breaks. Stimulates the branch migration of RecA-mediated strand transfer reactions, allowing the 3' invading strand to extend heteroduplex DNA faster. Binds ssDNA in the presence of ADP but not other nucleotides, has ATPase activity that is stimulated by ssDNA and various branched DNA structures, but inhibited by SSB. Does not have RecA's homology-searching function. The polypeptide is DNA repair protein RadA (Rickettsia conorii (strain ATCC VR-613 / Malish 7)).